The sequence spans 417 residues: Senescence-associated protein AAF, chloroplastic (417 aa).

Residues 1-36 (MALNVSKVVPNSPILVKSVNASRSRRVLLAYVHHPL) constitute a chloroplast transit peptide.

The protein belongs to the ATA15/OSA15 family. Expressed in leaves. Expressed in 7-day-old seedlings, roots, rosette leaves, cauline leaves and flower buds.

Its subcellular location is the plastid. The protein resides in the chloroplast. Involved in modulation of redox homeostasis to regulate leaf senescence mediated by age and stress factors during plant development. Its function is dependent of EIN2, a central factor of ethylene signaling. The polypeptide is Senescence-associated protein AAF, chloroplastic (Arabidopsis thaliana (Mouse-ear cress)).